Consider the following 798-residue polypeptide: Integrin beta-1 (798 aa).

The N-terminal stretch at 1-20 (MNLQLIFWIGLISSVCCVFG) is a signal peptide. The Extracellular portion of the chain corresponds to 21–728 (QADEDRCLKA…ETPECPTGPD (708 aa)). Positions 26–76 (RCLKANAKSCGECIQAGPNCGWCTNSTFLQEGMPTSARCDDLEALKKKGCH) constitute a PSI domain. Disulfide bonds link Cys-27/Cys-45, Cys-35/Cys-464, Cys-38/Cys-64, Cys-48/Cys-75, Cys-207/Cys-213, Cys-261/Cys-301, Cys-401/Cys-415, Cys-435/Cys-462, Cys-466/Cys-486, Cys-477/Cys-489, Cys-491/Cys-500, Cys-502/Cys-533, Cys-516/Cys-531, Cys-525/Cys-536, Cys-538/Cys-553, Cys-555/Cys-576, Cys-560/Cys-574, Cys-568/Cys-579, Cys-581/Cys-590, Cys-592/Cys-615, Cys-599/Cys-613, Cys-607/Cys-618, Cys-620/Cys-630, Cys-633/Cys-636, Cys-640/Cys-691, Cys-646/Cys-665, Cys-649/Cys-661, and Cys-699/Cys-723. Residues 75 to 91 (CHPNDTENPRGSKDIKK) show a composition bias toward basic and acidic residues. A disordered region spans residues 75 to 105 (CHPNDTENPRGSKDIKKNKNVTNRSKGTAEK). Asn-94 and Asn-97 each carry an N-linked (GlcNAc...) asparagine glycan. The VWFA domain occupies 140–378 (DYPIDLYYLM…QLIIDAYNSL (239 aa)). Residues Ser-152 and Ser-154 each contribute to the Mg(2+) site. The Ca(2+) site is built by Ser-154, Asp-157, Asp-158, and Glu-189. Residues 207–213 (CTNEQNC) are CX3CL1-binding. The N-linked (GlcNAc...) asparagine glycan is linked to Asn-212. 4 residues coordinate Ca(2+): Asn-244, Asp-246, Pro-248, and Glu-249. A Mg(2+)-binding site is contributed by Glu-249. N-linked (GlcNAc...) asparagine glycosylation is present at Asn-269. Residues 295 to 314 (LPNDGQCHLKNDVYTMSHYY) form a CX3CL1-binding region. Residue Ala-362 coordinates Ca(2+). The interval 383–465 (ILENSKLPEG…IILQFICECE (83 aa)) is interaction with TMEM182. Asn-406 and Asn-417 each carry an N-linked (GlcNAc...) asparagine glycan. I-EGF domains lie at 466 to 501 (CQGE…RHCE), 502 to 554 (CSTD…KFCE), 555 to 591 (CDNF…SACD), and 592 to 631 (CSLD…PTCE). Asn-481 carries an N-linked (GlcNAc...) asparagine glycan. An N-linked (GlcNAc...) asparagine glycan is attached at Asn-520. A glycan (N-linked (GlcNAc...) asparagine) is linked at Asn-584. An N-linked (GlcNAc...) asparagine glycan is attached at Asn-669. A helical transmembrane segment spans residues 729 to 749 (IIPIVAGVVAGIVLIGLALLL). At 750 to 798 (IWKLLMIIHDRREFAKFEKERMNAKWDTGENPIYKSAVTTVVNPKYEGK) the chain is on the cytoplasmic side. The interval 762-767 (EFAKFE) is signal for sorting from recycling endosomes; interaction with ACAP1. Residue Thr-777 is modified to Phosphothreonine. At Tyr-783 the chain carries Phosphotyrosine. Ser-785 is modified (phosphoserine). An interaction with ITGB1BP1 region spans residues 785–792 (SAVTTVVN). Residue Thr-789 is modified to Phosphothreonine. The residue at position 794 (Lys-794) is an N6-acetyllysine; alternate. Residue Lys-794 forms a Glycyl lysine isopeptide (Lys-Gly) (interchain with G-Cter in SUMO1); alternate linkage.

It belongs to the integrin beta chain family. In terms of assembly, interacts with seprase FAP (seprase); the interaction occurs at the cell surface of invadopodia membrane in a collagen-dependent manner. Heterodimer of an alpha and a beta subunit. Beta-1 associates with either alpha-1, alpha-2, alpha-3, alpha-4, alpha-5, alpha-6, alpha-7, alpha-8, alpha-9, alpha-10, alpha-11 or alpha-V. ITGA6:ITGB1 is found in a complex with CD9; interaction takes place in oocytes and is involved in sperm-egg fusion. Binds LGALS3BP and NMRK2, when associated with alpha-7, but not with alpha-5. Interacts with FLNA, FLNB, FLNC and RANBP9. Interacts with KRT1 in the presence of RACK1 and SRC. Interacts with JAML; integrin alpha-4/beta-1 may regulate leukocyte to endothelial cells adhesion by controlling JAML homodimerization. Interacts with RAB21. Interacts (via the cytoplasmic region) with RAB25 (via the hypervariable C-terminal region). Interacts with MYO10. Interacts with ITGB1BP1 (via C-terminal region); the interaction is a prerequisite for focal adhesion disassembly. Interacts with TLN1; the interaction is prevented by competitive binding of ITGB1BP1. Interacts with ACAP1; required for ITGB1 recycling. Interacts with ASAP3. Interacts with FERMT2; the interaction is inhibited in presence of ITGB1BP1. Interacts with DAB2. Interacts with FGR and HCK. Interacts with alpha-7A and alpha-7B in adult skeletal muscle. Interacts with alpha-7B in cardiomyocytes of adult heart. Interacts with EMP2; the interaction may be direct or indirect and ITGB1 has a heterodimer form. ITGA5:ITGB1 interacts with CCN3. ITGA4:ITGB1 is found in a ternary complex with CX3CR1 and CX3CL1. ITGA5:ITGB1 interacts with FBN1. ITGA5:ITGB1 acts as a receptor for fibronectin FN1 and mediates R-G-D-dependent cell adhesion to FN1. ITGA5:ITGB1 interacts with IL1B. Interacts with MDK. ITGA4:ITGB1 interacts with MDK; this interaction mediates MDK-induced osteoblast cells migration through PXN phosphorylation. ITGA6:ITGB1 interacts with MDK; this interaction mediates MDK-induced neurite-outgrowth. ITGA5:ITGB1 interacts with ACE2. Interacts with TMEM182 and LAMB1. Interacts with tensin TNS3; TNS3 also interacts with PEAK1, thus acting as an adapter molecule to bridge the association of PEAK1 with ITGB1. Interacts with tensin TNS4; the interaction displaces tensin TNS3 from the ITGB1 cytoplasmic tail and promotes ITGB1 stability. Integrin ITGA9:ITGB1 interacts with SPP1/OPN (via N-terminus). Integrin ITGA9:ITGB1 interacts with TNC/TNFN3 (via the 3rd Fibronectin type-III domain). Integrins ITGA4:ITGB1 and ITGA9:ITGB1 interact with SVEP1 (via Sushi domain 21); thereby inhibit Ca(2+) intracellular signaling and as a result repress vasocontraction. ITGA4:ITGB1 and ITGA5:ITGB1 interacts with SELP. Interacts with CD248. ITGA5:ITGB1 interacts with IGFBP1. ITGA4:ITGB1 interacts with BCAM. Interacts with ADGRG6.

It is found in the cell membrane. The protein resides in the cell projection. The protein localises to the invadopodium membrane. It localises to the ruffle membrane. Its subcellular location is the recycling endosome. It is found in the melanosome. The protein resides in the cell junction. The protein localises to the focal adhesion. It localises to the lamellipodium. Its subcellular location is the ruffle. Functionally, integrins alpha-1/beta-1, alpha-2/beta-1, alpha-10/beta-1 and alpha-11/beta-1 are receptors for collagen. Integrins alpha-1/beta-1 and alpha-2/beta-2 recognize the proline-hydroxylated sequence G-F-P-G-E-R in collagen. Integrins alpha-2/beta-1, alpha-3/beta-1, alpha-4/beta-1, alpha-5/beta-1, alpha-8/beta-1, alpha-10/beta-1, alpha-11/beta-1 and alpha-V/beta-1 are receptors for fibronectin. Alpha-4/beta-1 recognizes one or more domains within the alternatively spliced CS-1 and CS-5 regions of fibronectin. Integrin alpha-5/beta-1 is a receptor for fibrinogen. Integrin alpha-1/beta-1, alpha-2/beta-1, alpha-6/beta-1 and alpha-7/beta-1 are receptors for lamimin. Integrin alpha-6/beta-1 (ITGA6:ITGB1) is present in oocytes and is involved in sperm-egg fusion. Integrin alpha-4/beta-1 is a receptor for VCAM1 and recognizes the sequence Q-I-D-S in VCAM1. Integrin alpha-9/beta-1 is a receptor for VCAM1, cytotactin and osteopontin. It recognizes the sequence A-E-I-D-G-I-E-L in cytotactin. Integrin alpha-3/beta-1 is a receptor for epiligrin, thrombospondin and CSPG4. Integrin alpha-3/beta-1 provides a docking site for FAP (seprase) at invadopodia plasma membranes in a collagen-dependent manner and hence may participate in the adhesion, formation of invadopodia and matrix degradation processes, promoting cell invasion. Alpha-3/beta-1 may mediate with LGALS3 the stimulation by CSPG4 of endothelial cells migration. Integrin alpha-V/beta-1 is a receptor for vitronectin. Beta-1 integrins recognize the sequence R-G-D in a wide array of ligands. When associated with alpha-7/beta-1 integrin, regulates cell adhesion and laminin matrix deposition. Involved in promoting endothelial cell motility and angiogenesis. Involved in osteoblast compaction through the fibronectin fibrillogenesis cell-mediated matrix assembly process and the formation of mineralized bone nodules. May be involved in up-regulation of the activity of kinases such as PKC via binding to KRT1. Together with KRT1 and RACK1, serves as a platform for SRC activation or inactivation. Plays a mechanistic adhesive role during telophase, required for the successful completion of cytokinesis. ITGA4:ITGB1 binds to fractalkine (CX3CL1) and may act as its coreceptor in CX3CR1-dependent fractalkine signaling. ITGA4:ITGB1 and ITGA5:ITGB1 bind to PLA2G2A via a site (site 2) which is distinct from the classical ligand-binding site (site 1) and this induces integrin conformational changes and enhanced ligand binding to site 1. ITGA5:ITGB1 acts as a receptor for fibrillin-1 (FBN1) and mediates R-G-D-dependent cell adhesion to FBN1. ITGA5:ITGB1 is a receptor for IL1B and binding is essential for IL1B signaling. ITGA5:ITGB3 is a receptor for soluble CD40LG and is required for CD40/CD40LG signaling. Plays an important role in myoblast differentiation and fusion during skeletal myogenesis. ITGA9:ITGB1 may play a crucial role in SVEP1/polydom-mediated myoblast cell adhesion. Integrins ITGA9:ITGB1 and ITGA4:ITGB1 repress PRKCA-mediated L-type voltage-gated channel Ca(2+) influx and ROCK-mediated calcium sensitivity in vascular smooth muscle cells via their interaction with SVEP1, thereby inhibit vasocontraction. This chain is Integrin beta-1, found in Camelus bactrianus (Bactrian camel).